A 1093-amino-acid chain; its full sequence is Leukemia inhibitory factor receptor (1093 aa).

An N-terminal signal peptide occupies residues 1 to 43 (MGAFSWWRQPSWMADNKRGRMTPSLPWLLSALTLLHLMMHVNG). Topologically, residues 44–829 (LKRGVQQDLK…SMFVVTKENS (786 aa)) are extracellular. Residues 45 to 127 (KRGVQQDLKC…QSKFTLNEKD (83 aa)) enclose the Fibronectin type-III 1 domain. Cystine bridges form between Cys54–Cys64 and Cys81–Cys89. Asn165, Asn200, Asn239, and Asn262 each carry an N-linked (GlcNAc...) asparagine glycan. 2 disulfides stabilise this stretch: Cys209/Cys266 and Cys337/Cys347. Fibronectin type-III domains follow at residues 331-428 (VPQK…ERVA), 431-530 (VPIS…TEAT), 534-625 (GPDT…IPND), 623-715 (PNDD…IGYI), and 720-829 (PIVA…KENS). 6 N-linked (GlcNAc...) asparagine glycosylation sites follow: Asn386, Asn403, Asn422, Asn441, Asn454, and Asn477. An intrachain disulfide couples Cys462 to Cys507. The WSXWS motif signature appears at 515-519 (WSKWS). Asn568, Asn648, Asn659, Asn676, Asn725, and Asn783 each carry an N-linked (GlcNAc...) asparagine glycan. A helical membrane pass occupies residues 830–850 (VGLIIAILIPVAVAVIVGVVT). The Cytoplasmic portion of the chain corresponds to 851-1093 (SILCYRKREW…TNFFQNKPND (243 aa)). Positions 865-873 (FYPDIPNPE) match the Box 1 motif motif. Disordered regions lie at residues 908-941 (ESRSIPPKIEDTEITSPVSERPGESSETDPENQA) and 1003-1093 (LPIN…KPND). Ser923 and Ser1040 each carry phosphoserine. 2 stretches are compositionally biased toward polar residues: residues 1028 to 1063 (ANVNTWNLVSPDSPRSTDSNSEVVSFGSPCSINSRQ) and 1082 to 1093 (SFTNFFQNKPND).

Belongs to the type I cytokine receptor family. Type 2 subfamily. In terms of assembly, heterodimer composed of LIFR and IL6ST. The heterodimer formed by LIFR and IL6ST interacts with the complex formed by CNTF and CNTFR.

It localises to the cell membrane. Signal-transducing molecule. May have a common pathway with IL6ST. The soluble form inhibits the biological activity of LIF by blocking its binding to receptors on target cells. This chain is Leukemia inhibitory factor receptor (Lifr), found in Rattus norvegicus (Rat).